We begin with the raw amino-acid sequence, 200 residues long: Probable GTP-binding protein EngB (200 aa).

Residues 22-199 (GLDEIALAGR…KDWIQARLYE (178 aa)) enclose the EngB-type G domain. GTP is bound by residues 30-37 (GRSNVGKS), 57-61 (GKTQT), 78-81 (DVPG), 145-148 (TKMD), and 178-180 (FSS). Mg(2+) contacts are provided by S37 and T59.

The protein belongs to the TRAFAC class TrmE-Era-EngA-EngB-Septin-like GTPase superfamily. EngB GTPase family. Requires Mg(2+) as cofactor.

Its function is as follows. Necessary for normal cell division and for the maintenance of normal septation. The sequence is that of Probable GTP-binding protein EngB from Lactobacillus delbrueckii subsp. bulgaricus (strain ATCC 11842 / DSM 20081 / BCRC 10696 / JCM 1002 / NBRC 13953 / NCIMB 11778 / NCTC 12712 / WDCM 00102 / Lb 14).